Consider the following 184-residue polypeptide: MAAHKVNFITGNANKLREVKAILEPEIEVTSKSIDLEEVQGTLEEVTESKCRRAAELVKGPVLVEDTALCYTALGGLPGAYIKWFLTTIGHQGLNNLLAAYTDKSAEAVCTFGYCAGPGEKVILFQGRCPGKIVPARGPNNFGWDPVFEYEGQTFAEMDKVEKNKISHRSRALAKLQAWFKEQQ.

Threonine 10–lysine 15 serves as a coordination point for ITP. A Mg(2+)-binding site is contributed by glutamate 38. ITP contacts are provided by residues lysine 50, aspartate 66–threonine 67, lysine 83, phenylalanine 142–aspartate 145, lysine 163, and histidine 168–arginine 169.

This sequence belongs to the HAM1 NTPase family. As to quaternary structure, homodimer. The cofactor is Mg(2+). Requires Mn(2+) as cofactor.

Its subcellular location is the cytoplasm. The protein localises to the nucleus. It catalyses the reaction ITP + H2O = IMP + diphosphate + H(+). The catalysed reaction is dITP + H2O = dIMP + diphosphate + H(+). It carries out the reaction XTP + H2O = XMP + diphosphate + H(+). Its function is as follows. Pyrophosphatase that hydrolyzes non-canonical purine nucleotides such as inosine triphosphate (ITP), deoxyinosine triphosphate (dITP) or xanthosine 5'-triphosphate (XTP) to their respective monophosphate derivatives. The enzyme does not distinguish between the deoxy- and ribose forms. Probably excludes non-canonical purines from RNA and DNA precursor pools, thus preventing their incorporation into RNA and DNA and avoiding chromosomal lesions. The sequence is that of Inosine triphosphate pyrophosphatase from Fusarium vanettenii (strain ATCC MYA-4622 / CBS 123669 / FGSC 9596 / NRRL 45880 / 77-13-4) (Fusarium solani subsp. pisi).